Reading from the N-terminus, the 100-residue chain is MDARSLLLLWLLLPLLLLLGCEVQGAHLTQQDEPTSPDLLETLSTYWDSAKAAAQGLYNNTYLPAVDETIRDIYSKGSAAISTYTGILTDQILTMLQGKQ.

A signal peptide spans 1–25; that stretch reads MDARSLLLLWLLLPLLLLLGCEVQG. A lipid binding region spans residues 65-73; sequence AVDETIRDI. Residues 77-100 form a lipoprotein lipase cofactor region; that stretch reads GSAAISTYTGILTDQILTMLQGKQ.

This sequence belongs to the apolipoprotein C2 family. In terms of processing, proapolipoprotein C-II is synthesized as a sialic acid containing glycoprotein which is subsequently desialylated prior to its proteolytic processing. Post-translationally, proapolipoprotein C-II, the major form found in plasma undergoes proteolytic cleavage of its N-terminal hexapeptide to generate apolipoprotein C-II, which occurs as the minor form in plasma. Liver.

It localises to the secreted. In terms of biological role, component of chylomicrons, very low-density lipoproteins (VLDL), low-density lipoproteins (LDL), and high-density lipoproteins (HDL) in plasma. Plays an important role in lipoprotein metabolism as an activator of lipoprotein lipase. Both proapolipoprotein C-II and apolipoprotein C-II can activate lipoprotein lipase. This is Apolipoprotein C-II (APOC2) from Cavia porcellus (Guinea pig).